The sequence spans 161 residues: LSWSALALTSAYPTGAPTSACFDMIPGHFASPQSEPAPYIITTPVSAVKAGDSIEVTISGKTAKDTMRGILLEARQGDKIVGTWTVKPNDNFSQLLNCGEPGNAVTHKHHANSEDKQTVSYLWTASGHLEGDVVFKVTIVKDYHTFWVAVPSAPVKILSHH.

A signal peptide spans 1 to 11; sequence LSWSALALTSA. In terms of domain architecture, Reelin spans 12–161; the sequence is YPTGAPTSAC…SAPVKILSHH (150 aa). A disulfide bridge connects residues C21 and C98. A glycan (N-linked (GlcNAc...) asparagine) is linked at N91.

Belongs to the insect defense protein family.

It localises to the secreted. May have antimicrobial activity. In Antheraea mylitta (Tasar silkworm), this protein is Putative defense protein 2.